Consider the following 174-residue polypeptide: Bifunctional protein PyrR (174 aa).

Residues 38 to 39 (SG), 95 to 103 (DDVLATGRT), and Arg-128 contribute to the substrate site. Residues 91-103 (ILLVDDVLATGRT) carry the PRPP-binding motif.

The protein belongs to the purine/pyrimidine phosphoribosyltransferase family. PyrR subfamily.

It catalyses the reaction UMP + diphosphate = 5-phospho-alpha-D-ribose 1-diphosphate + uracil. Regulates the transcription of the pyrimidine nucleotide (pyr) operon in response to exogenous pyrimidines. Functionally, also displays a weak uracil phosphoribosyltransferase activity which is not physiologically significant. The polypeptide is Bifunctional protein PyrR (Ralstonia nicotianae (strain ATCC BAA-1114 / GMI1000) (Ralstonia solanacearum)).